We begin with the raw amino-acid sequence, 2284 residues long: RNA1 polyprotein (2284 aa).

The Cytoplasmic segment spans residues 569-1171; sequence CTAEEIFRMH…QVVVENYSLL (603 aa). Residues 751 to 919 enclose the SF3 helicase domain; it reads VSKLEEVHAR…DGSFFTPRAY (169 aa). 781-788 contacts ATP; the sequence is GASQSGKT. Residues 1172 to 1192 traverse the membrane as a helical segment; that stretch reads LTLVAILLLISAAYTLLSTVV. Topologically, residues 1193–1217 are lumenal; the sequence is ALAGCSSFAGGMVAVTAVNNASIPC. The residue at position 1218 (Ser-1218) is an O-(5'-phospho-RNA)-serine. The 216-residue stretch at 1243 to 1458 folds into the Peptidase C3 domain; the sequence is GPSKGQGEHE…SVIPNYSSSF (216 aa). Catalysis depends on for picornain 3C-like protease activity residues His-1284, Glu-1328, and Cys-1420. The RdRp catalytic domain occupies 1728 to 1852; sequence DVGYNCDYKA…TVAQSVMQYF (125 aa).

Specific enzymatic cleavages by picornain 3C-like protease in vivo yield mature proteins. Picornain 3C-like protease is autocatalytically processed. Post-translationally, VPg is uridylylated by the polymerase and is covalently linked to the 5'-end of genomic RNA. This uridylylated form acts as a nucleotide-peptide primer for the polymerase.

Its subcellular location is the host endoplasmic reticulum lumen. The protein localises to the host endoplasmic reticulum membrane. The enzyme catalyses RNA(n) + a ribonucleoside 5'-triphosphate = RNA(n+1) + diphosphate. In terms of biological role, picornain 3C-like protease is a thiol protease that cleaves the P1 and P2 polyproteins. The polypeptide is RNA1 polyprotein (Vitis rupestris (Grape)).